Here is a 609-residue protein sequence, read N- to C-terminus: UvrABC system protein C (609 aa).

The region spanning 13 to 91 is the GIY-YIG domain; the sequence is HEPGVYRMYD…IKLYQPRYNV (79 aa). Residues 201–236 enclose the UVR domain; it reads QQVLDYLIGKMEQASRNLDFEQAARYRDQIQAVRSV.

The protein belongs to the UvrC family. In terms of assembly, interacts with UvrB in an incision complex.

Its subcellular location is the cytoplasm. Functionally, the UvrABC repair system catalyzes the recognition and processing of DNA lesions. UvrC both incises the 5' and 3' sides of the lesion. The N-terminal half is responsible for the 3' incision and the C-terminal half is responsible for the 5' incision. This chain is UvrABC system protein C, found in Haemophilus influenzae (strain 86-028NP).